We begin with the raw amino-acid sequence, 38 residues long: Lebetin-2-alpha (38 aa).

A disordered region spans residues 1 to 38 (GDNKPPKKGPPNGCFGHKIDRIGSHSGLGCNKVDDNKG). A disulfide bridge connects residues Cys14 and Cys30.

The protein belongs to the natriuretic peptide family. Expressed by the venom gland.

The protein localises to the secreted. Inhibits platelet aggregation induced by thrombin, collagen and PAF-acether. Human platelet aggregation induced by thrombin is inhibited by synthetic lebetin-1-alpha with (IC(50)=140 nM). In vivo, inhibits collagen-induced thrombocytopenia in rats. Is not toxic upon intravenous injection into mice and rats. Functionally, inhibits platelet aggregation induced by thrombin, collagen and PAF-acether. Human platelet aggregation induced by thrombin is inhibited by synthetic lebetin-1-beta with (IC(50)=32 nM). In vivo, inhibits collagen-induced thrombocytopenia in rats. Is not toxic upon intravenous injection into mice and rats. In terms of biological role, inhibits platelet aggregation induced by thrombin, collagen and PAF-acether. Human platelet aggregation induced by thrombin is inhibited by synthetic lebetin-1-gamma with (IC(50)=5 nM). In vivo, inhibits collagen-induced thrombocytopenia in rats. Is not toxic upon intravenous injection into mice and rats. Its function is as follows. Inhibits platelet aggregation induced by thrombin, collagen and PAF-acether. Human platelet aggregation induced by thrombin is inhibited by synthetic lebetin-1-alpha with (IC(50)=2.5 nM). In vivo, inhibits collagen-induced thrombocytopenia in rats. Is not toxic upon intravenous injection into mice and rats. Inhibits platelet aggregation induced by thrombin, collagen and PAF-acether. Human platelet aggregation induced by thrombin is inhibited by synthetic lebetin-1-alpha with (IC(50)=2.8 nM). In vivo, inhibits collagen-induced thrombocytopenia in rats. Is not toxic upon intravenous injection into mice and rats. The chain is Lebetin-2-alpha from Macrovipera lebetinus (Levantine viper).